A 219-amino-acid chain; its full sequence is Deoxyribose-phosphate aldolase (219 aa).

Asp89 (proton donor/acceptor) is an active-site residue. The active-site Schiff-base intermediate with acetaldehyde is the Lys151. Residue Lys180 is the Proton donor/acceptor of the active site.

This sequence belongs to the DeoC/FbaB aldolase family. DeoC type 1 subfamily.

Its subcellular location is the cytoplasm. The enzyme catalyses 2-deoxy-D-ribose 5-phosphate = D-glyceraldehyde 3-phosphate + acetaldehyde. It functions in the pathway carbohydrate degradation; 2-deoxy-D-ribose 1-phosphate degradation; D-glyceraldehyde 3-phosphate and acetaldehyde from 2-deoxy-alpha-D-ribose 1-phosphate: step 2/2. In terms of biological role, catalyzes a reversible aldol reaction between acetaldehyde and D-glyceraldehyde 3-phosphate to generate 2-deoxy-D-ribose 5-phosphate. The polypeptide is Deoxyribose-phosphate aldolase (Clostridioides difficile (strain 630) (Peptoclostridium difficile)).